We begin with the raw amino-acid sequence, 182 residues long: Putative adenylate kinase (182 aa).

ATP-binding residues include Gly-10, Gly-12, Lys-13, Thr-14, and Ser-15. Residues 30–53 are NMP; the sequence is HLNEMIKEEHLYTEVDEVRDAVIA. An LID region spans residues 104-114; the sequence is ARGYSEEKIRE. ATP contacts are provided by Arg-105 and Lys-143.

The protein belongs to the adenylate kinase family. AK6 subfamily. As to quaternary structure, interacts with uS11. Not a structural component of 40S pre-ribosomes, but transiently interacts with them by binding to uS11.

It catalyses the reaction AMP + ATP = 2 ADP. The catalysed reaction is ATP + H2O = ADP + phosphate + H(+). In terms of biological role, broad-specificity nucleoside monophosphate (NMP) kinase that catalyzes the reversible transfer of the terminal phosphate group between nucleoside triphosphates and monophosphates. Also has ATPase activity. Involved in the late maturation steps of the 30S ribosomal particles, specifically 16S rRNA maturation. While NMP activity is not required for ribosome maturation, ATPase activity is. Associates transiently with small ribosomal subunit protein uS11. ATP hydrolysis breaks the interaction with uS11. May temporarily remove uS11 from the ribosome to enable a conformational change of the ribosomal RNA that is needed for the final maturation step of the small ribosomal subunit. The chain is Putative adenylate kinase from Methanosarcina barkeri (strain Fusaro / DSM 804).